A 233-amino-acid polypeptide reads, in one-letter code: Leucyl/phenylalanyl-tRNA--protein transferase (233 aa).

This sequence belongs to the L/F-transferase family.

Its subcellular location is the cytoplasm. It carries out the reaction N-terminal L-lysyl-[protein] + L-leucyl-tRNA(Leu) = N-terminal L-leucyl-L-lysyl-[protein] + tRNA(Leu) + H(+). The enzyme catalyses N-terminal L-arginyl-[protein] + L-leucyl-tRNA(Leu) = N-terminal L-leucyl-L-arginyl-[protein] + tRNA(Leu) + H(+). It catalyses the reaction L-phenylalanyl-tRNA(Phe) + an N-terminal L-alpha-aminoacyl-[protein] = an N-terminal L-phenylalanyl-L-alpha-aminoacyl-[protein] + tRNA(Phe). Its function is as follows. Functions in the N-end rule pathway of protein degradation where it conjugates Leu, Phe and, less efficiently, Met from aminoacyl-tRNAs to the N-termini of proteins containing an N-terminal arginine or lysine. This Anaeromyxobacter dehalogenans (strain 2CP-1 / ATCC BAA-258) protein is Leucyl/phenylalanyl-tRNA--protein transferase.